The chain runs to 78 residues: DNA-directed RNA polymerase subunit Rpo5 (78 aa).

Belongs to the archaeal Rpo5/eukaryotic RPB5 RNA polymerase subunit family. Part of the RNA polymerase complex.

Its subcellular location is the cytoplasm. It catalyses the reaction RNA(n) + a ribonucleoside 5'-triphosphate = RNA(n+1) + diphosphate. Functionally, DNA-dependent RNA polymerase (RNAP) catalyzes the transcription of DNA into RNA using the four ribonucleoside triphosphates as substrates. The sequence is that of DNA-directed RNA polymerase subunit Rpo5 from Methanococcus maripaludis (strain C7 / ATCC BAA-1331).